We begin with the raw amino-acid sequence, 1069 residues long: Thyrotropin-releasing hormone-degrading ectoenzyme (1069 aa).

Residues 1-11 show a composition bias toward acidic residues; it reads MALDGELGEQE. Residues 1-46 form a disordered region; it reads MALDGELGEQEEEKKKKKKKKRKKKKEEEEEEEGAEKSSSPFAAAM. Topologically, residues 1–85 are cytoplasmic; sequence MALDGELGEQ…ERHIAVHKRL (85 aa). A compositionally biased stretch (basic residues) spans 15 to 25; that stretch reads KKKKKKKRKKK. A helical; Signal-anchor for type II membrane protein transmembrane segment spans residues 86 to 106; sequence VLAFAVSLVALLAVTMLAVLL. The Extracellular segment spans residues 107-1069; sequence SLRFDECGAS…FQWLGKALRH (963 aa). Positions 117 to 179 are disordered; that stretch reads ATPGADGGPS…PSEEEREPWE (63 aa). Over residues 121–136 the composition is skewed to gly residues; that stretch reads ADGGPSGFPERGGNGS. N-linked (GlcNAc...) asparagine glycans are attached at residues Asn-134, Asn-205, Asn-220, Asn-267, and Asn-383. 449–453 lines the substrate pocket; it reads AAMEN. His-485 contributes to the Zn(2+) binding site. Glu-486 functions as the Proton acceptor in the catalytic mechanism. His-489 and Glu-508 together coordinate Zn(2+). Asn-650, Asn-679, Asn-694, Asn-708, Asn-729, Asn-845, and Asn-951 each carry an N-linked (GlcNAc...) asparagine glycan.

It belongs to the peptidase M1 family. Homodimer; disulfide-linked. It depends on Zn(2+) as a cofactor. In terms of tissue distribution, predominantly expressed in brain.

Its subcellular location is the membrane. It carries out the reaction Release of the N-terminal pyroglutamyl group from pGlu-|-His-Xaa tripeptides and pGlu-|-His-Xaa-Gly tetrapeptides.. Its function is as follows. Specific inactivation of TRH after its release. In Homo sapiens (Human), this protein is Thyrotropin-releasing hormone-degrading ectoenzyme (TRHDE).